The chain runs to 588 residues: Probable cytochrome c oxidase subunit 1-beta (588 aa).

The tract at residues 1 to 26 (MTATPAQRRPALPATRPYPARHGPKG) is disordered. The chain crosses the membrane as a helical span at residues 43–63 (VLYLVSATGFFLIGGLLALLM). His-87 contacts Fe(II)-heme a. The next 6 membrane-spanning stretches (helical) occupy residues 90–110 (IMLL…VLPL), 128–148 (WLYL…GGAA), 171–191 (LWIL…VNMI), 214–234 (ILIT…ALMA), 259–279 (LFWF…FGII), and 291–311 (IFGY…SMAV). 2 residues coordinate Cu cation: His-265 and Tyr-269. Residues 265 to 269 (HPEVY) constitute a cross-link (1'-histidyl-3'-tyrosine (His-Tyr)). 2 residues coordinate Cu cation: His-314 and His-315. The next 2 helical transmembrane spans lie at 320–340 (GAVL…PTGV) and 360–380 (MLFA…GVIL). Heme a3 is bound at residue His-398. 3 consecutive transmembrane segments (helical) span residues 399 to 419 (FHYV…YFWF), 434 to 454 (LHFW…HWLG), and 477 to 497 (VSTI…WNGF). His-400 contacts Fe(II)-heme a. The tract at residues 557 to 588 (AEAHAGRRAGHGAGAELSVPSTVATKDDDHTS) is disordered.

The protein belongs to the heme-copper respiratory oxidase family. In terms of assembly, associates with subunits II, III and IV to form cytochrome c oxidase. It depends on Cu(2+) as a cofactor. Heme is required as a cofactor.

The protein localises to the cell membrane. The catalysed reaction is 4 Fe(II)-[cytochrome c] + O2 + 8 H(+)(in) = 4 Fe(III)-[cytochrome c] + 2 H2O + 4 H(+)(out). It participates in energy metabolism; oxidative phosphorylation. Its function is as follows. Cytochrome c oxidase is the component of the respiratory chain that catalyzes the reduction of oxygen to water. Subunits 1-3 form the functional core of the enzyme complex. CO I is the catalytic subunit of the enzyme. Electrons originating in cytochrome c are transferred via the copper A center of subunit 2 and heme A of subunit 1 to the bimetallic center formed by heme A3 and copper B. The chain is Probable cytochrome c oxidase subunit 1-beta (ctaD2) from Nocardia farcinica (strain IFM 10152).